Reading from the N-terminus, the 93-residue chain is Large ribosomal subunit protein uL23cz/uL23cy (93 aa).

This sequence belongs to the universal ribosomal protein uL23 family. Part of the 50S ribosomal subunit.

Its subcellular location is the plastid. The protein resides in the chloroplast. Functionally, binds to 23S rRNA. The sequence is that of Large ribosomal subunit protein uL23cz/uL23cy (rpl23-A) from Acorus calamus (Sweet flag).